Reading from the N-terminus, the 322-residue chain is Lipoyl synthase (322 aa).

The tract at residues M1–Q24 is disordered. The span at R14–Q24 shows a compositional bias: basic and acidic residues. [4Fe-4S] cluster contacts are provided by C59, C64, C70, C85, C89, C92, and S298. Positions W71–L287 constitute a Radical SAM core domain.

The protein belongs to the radical SAM superfamily. Lipoyl synthase family. [4Fe-4S] cluster serves as cofactor.

The protein localises to the cytoplasm. It carries out the reaction [[Fe-S] cluster scaffold protein carrying a second [4Fe-4S](2+) cluster] + N(6)-octanoyl-L-lysyl-[protein] + 2 oxidized [2Fe-2S]-[ferredoxin] + 2 S-adenosyl-L-methionine + 4 H(+) = [[Fe-S] cluster scaffold protein] + N(6)-[(R)-dihydrolipoyl]-L-lysyl-[protein] + 4 Fe(3+) + 2 hydrogen sulfide + 2 5'-deoxyadenosine + 2 L-methionine + 2 reduced [2Fe-2S]-[ferredoxin]. The protein operates within protein modification; protein lipoylation via endogenous pathway; protein N(6)-(lipoyl)lysine from octanoyl-[acyl-carrier-protein]: step 2/2. Functionally, catalyzes the radical-mediated insertion of two sulfur atoms into the C-6 and C-8 positions of the octanoyl moiety bound to the lipoyl domains of lipoate-dependent enzymes, thereby converting the octanoylated domains into lipoylated derivatives. The chain is Lipoyl synthase from Chelativorans sp. (strain BNC1).